An 812-amino-acid chain; its full sequence is Eukaryotic translation initiation factor 3 subunit C (812 aa).

The segment at 1-110 is disordered; the sequence is MSRFFSSNYE…EESDEEDGKK (110 aa). 2 stretches are compositionally biased toward acidic residues: residues 18–30 and 38–64; these read SEED…EEDL and SELD…DSDD. Phosphoserine occurs at positions 98, 99, and 103. The region spanning 608 to 783 is the PCI domain; the sequence is YHQHINLDLI…TIFVVEKGDE (176 aa).

The protein belongs to the eIF-3 subunit C family. As to quaternary structure, the eukaryotic translation initiation factor 3 (eIF-3) core complex is composed of TIF32, PRT1, NIP1, TIF34 and TIF35. A subcomplex of TIF32, NIP1 and PRT1 mediates the interaction with eIF-1, TIF5/eIF-5 and HCR1. The factors eIF-1, eIF-2, eIF-3, TIF5/eIF-5 and methionyl-tRNAi form a multifactor complex (MFC) that may bind to the 40S ribosome. TIF32, NIP1 and TIF5/eIF-5 comprise a minimal 40S-ribosome-binding unit. NIP1 interacts with TIF5/eIF-5 and SUI1.

The protein localises to the cytoplasm. Its function is as follows. Component of the eukaryotic translation initiation factor 3 (eIF-3) complex, which is involved in protein synthesis of a specialized repertoire of mRNAs and, together with other initiation factors, stimulates binding of mRNA and methionyl-tRNAi to the 40S ribosome. The eIF-3 complex specifically targets and initiates translation of a subset of mRNAs involved in cell proliferation. The sequence is that of Eukaryotic translation initiation factor 3 subunit C from Saccharomyces cerevisiae (strain ATCC 204508 / S288c) (Baker's yeast).